Reading from the N-terminus, the 740-residue chain is Catalase-peroxidase 2 (740 aa).

An N-terminal signal peptide occupies residues 1–27; sequence MFKKTKPRISILALTISCAIYSGAALA. A cross-link (tryptophyl-tyrosyl-methioninium (Trp-Tyr) (with M-254)) is located at residues 106-228; sequence WHSAGTYRIY…LAAVQMGLIY (123 aa). The Proton acceptor role is filled by His-107. The tryptophyl-tyrosyl-methioninium (Tyr-Met) (with W-106) cross-link spans 228–254; the sequence is YVNPEGPNGVPDPLLAAKDIRDTFGRM. His-269 is a heme b binding site.

Belongs to the peroxidase family. Peroxidase/catalase subfamily. Homodimer or homotetramer. The cofactor is heme b. Post-translationally, formation of the three residue Trp-Tyr-Met cross-link is important for the catalase, but not the peroxidase activity of the enzyme.

It catalyses the reaction H2O2 + AH2 = A + 2 H2O. The enzyme catalyses 2 H2O2 = O2 + 2 H2O. Bifunctional enzyme with both catalase and broad-spectrum peroxidase activity. This chain is Catalase-peroxidase 2, found in Cellvibrio japonicus (strain Ueda107) (Pseudomonas fluorescens subsp. cellulosa).